The chain runs to 222 residues: MSDVFEGYERQYCELSTNLSRKCHSASVLSNGEEKKGKIAEIKSGIDEADVLIRKMDLEARSLQPSAKAVCLSKLREYKSDLNQLKKEFKRVSSADAKPSSREELMESGMADLHAVSADQRGRLAMSVERLDQSSDRIRESRRLMLETEEVGISIVQDLSQQRQTLLHAHNKLHGVDDAIDKSKKVLTAMSRRMTRNKWIITSVIVALVLAIILIISYKLSH.

Ser-2 is modified (N-acetylserine). The Cytoplasmic portion of the chain corresponds to 2–199 (SDVFEGYERQ…MSRRMTRNKW (198 aa)). Positions 68 to 95 (KAVCLSKLREYKSDLNQLKKEFKRVSSA) form a coiled coil. The helical; Anchor for type IV membrane protein transmembrane segment at 200 to 220 (IITSVIVALVLAIILIISYKL) threads the bilayer. At 221-222 (SH) the chain is on the vesicular side.

The protein belongs to the VTI1 family. Forms SNARE complexes with the t-SNAREs SYP61 and either SYP41 or SYP42, and with a much lower affinity with SYP51 in the TGN. Also interacts with VPS45, a Sec1 protein, but not with SYP21 or SYP22. Binds to EPSIN2. Core constituent of the SNARE complex required for membrane fusion at the trans-Golgi network. Interacts with SCYL2B. In terms of tissue distribution, expressed in roots, stems, flowers and leaves.

It localises to the golgi apparatus. It is found in the trans-Golgi network membrane. The protein localises to the prevacuolar compartment membrane. The protein resides in the cell membrane. In terms of biological role, together with either SYP41 or SYP61, required for membrane fusion; the fusion of phospholipid vesicles containing SYP41 or SYP61 and VTI12 is triggered by YKT61 and YKT62. Functions as a v-SNARE responsible for the docking or fusion of transport vesicles within the trans-Golgi network (TGN) and mediates liposome fusion. Necessary to deliver proteins to the protein storage vacuole (PSV). May be also involved in retrograde traffic to the cis-Golgi. This is Vesicle transport v-SNARE 12 from Arabidopsis thaliana (Mouse-ear cress).